The chain runs to 337 residues: Hsp90 co-chaperone Cdc37-like 1 (337 aa).

Over residues 1 to 11 (MEQPWPPPGPW) the composition is skewed to pro residues. Positions 1–40 (MEQPWPPPGPWSLPRAEGEAEEESDFDVFPSSPRCPQLPG) are disordered. The segment at 2–171 (EQPWPPPGPW…YEQKIRHFGM (170 aa)) is self-association. Phosphoserine is present on residues Ser32 and Ser88. Residues 84–122 (HNSESLDQEHAKAQTAVSELRQREEEWRQKEEALVQREK) adopt a coiled-coil conformation. Residues 147 to 277 (KDTEDEDKSE…SRVRLYSQSQ (131 aa)) are self-association and interaction with Hsp90. The interaction with Hsp70 stretch occupies residues 267–337 (KSRVRLYSQS…DDEPKMMDTV (71 aa)). The segment at 278-337 (SFQPMTVQNHVPHSGVGSIGLLESLPQNPDYLQYSISTALCSLNSVVHKEDDEPKMMDTV) is required for interaction with STIP1.

Belongs to the CDC37 family. In terms of assembly, self-associates. Forms complexes with Hsp70 and Hsp90. Interacts with CDC37, FKBP4, PPID and STIP1. Expressed in brain, heart, kidney, liver, placenta and skeletal muscle.

The protein localises to the cytoplasm. In terms of biological role, co-chaperone that binds to numerous proteins and promotes their interaction with Hsp70 and Hsp90. The chain is Hsp90 co-chaperone Cdc37-like 1 (CDC37L1) from Homo sapiens (Human).